The sequence spans 163 residues: Cyanate hydratase (163 aa).

Active-site residues include Arg-103, Glu-106, and Ser-129.

Belongs to the cyanase family.

It carries out the reaction cyanate + hydrogencarbonate + 3 H(+) = NH4(+) + 2 CO2. Functionally, catalyzes the reaction of cyanate with bicarbonate to produce ammonia and carbon dioxide. This chain is Cyanate hydratase, found in Talaromyces stipitatus (strain ATCC 10500 / CBS 375.48 / QM 6759 / NRRL 1006) (Penicillium stipitatum).